Here is a 544-residue protein sequence, read N- to C-terminus: Putative cysteine ligase BshC (544 aa).

The stretch at 431–463 forms a coiled coil; the sequence is LNDTCRTIKEEHEKFIQELSRLDEKIYDFEEKN.

Belongs to the BshC family.

Functionally, involved in bacillithiol (BSH) biosynthesis. May catalyze the last step of the pathway, the addition of cysteine to glucosamine malate (GlcN-Mal) to generate BSH. This chain is Putative cysteine ligase BshC, found in Natranaerobius thermophilus (strain ATCC BAA-1301 / DSM 18059 / JW/NM-WN-LF).